The following is a 392-amino-acid chain: Multidrug resistance protein MdtL (392 aa).

The next 12 membrane-spanning stretches (helical) occupy residues 4–24, 38–58, 69–89, 95–115, 131–151, 158–178, 209–229, 246–266, 270–290, 294–314, 331–351, and 357–377; these read FLLC…MYLV, AQLH…MLFA, PVAI…AQVH, LIGR…AFAI, LLNG…HLIM, SLFY…VFIL, LLIT…SPVL, ALMA…LSLF, TLML…SLAT, VTLI…GVAM, VLGI…AIIG, and MLIG…LVVT.

Belongs to the major facilitator superfamily. DHA1 family. MdtL (TC 2.A.1.2.22) subfamily.

The protein resides in the cell inner membrane. The sequence is that of Multidrug resistance protein MdtL from Klebsiella pneumoniae subsp. pneumoniae (strain ATCC 700721 / MGH 78578).